A 123-amino-acid chain; its full sequence is Large ribosomal subunit protein bL12 (123 aa).

It belongs to the bacterial ribosomal protein bL12 family. Homodimer. Part of the ribosomal stalk of the 50S ribosomal subunit. Forms a multimeric L10(L12)X complex, where L10 forms an elongated spine to which 2 to 4 L12 dimers bind in a sequential fashion. Binds GTP-bound translation factors.

Functionally, forms part of the ribosomal stalk which helps the ribosome interact with GTP-bound translation factors. Is thus essential for accurate translation. The polypeptide is Large ribosomal subunit protein bL12 (Metamycoplasma arthritidis (strain 158L3-1) (Mycoplasma arthritidis)).